The primary structure comprises 947 residues: Bifunctional glutamine synthetase adenylyltransferase/adenylyl-removing enzyme (947 aa).

The adenylyl removase stretch occupies residues 1-440 (MTPLSSPLSQ…VFNELIGDDE (440 aa)). Residues 450–947 (SEPWRDVWQD…ASWRKWLVAV (498 aa)) form an adenylyl transferase region.

This sequence belongs to the GlnE family. It depends on Mg(2+) as a cofactor.

It carries out the reaction [glutamine synthetase]-O(4)-(5'-adenylyl)-L-tyrosine + phosphate = [glutamine synthetase]-L-tyrosine + ADP. It catalyses the reaction [glutamine synthetase]-L-tyrosine + ATP = [glutamine synthetase]-O(4)-(5'-adenylyl)-L-tyrosine + diphosphate. Involved in the regulation of glutamine synthetase GlnA, a key enzyme in the process to assimilate ammonia. When cellular nitrogen levels are high, the C-terminal adenylyl transferase (AT) inactivates GlnA by covalent transfer of an adenylyl group from ATP to specific tyrosine residue of GlnA, thus reducing its activity. Conversely, when nitrogen levels are low, the N-terminal adenylyl removase (AR) activates GlnA by removing the adenylyl group by phosphorolysis, increasing its activity. The regulatory region of GlnE binds the signal transduction protein PII (GlnB) which indicates the nitrogen status of the cell. In Salmonella dublin (strain CT_02021853), this protein is Bifunctional glutamine synthetase adenylyltransferase/adenylyl-removing enzyme.